Reading from the N-terminus, the 425-residue chain is Glutamate-1-semialdehyde 2,1-aminomutase (425 aa).

Lys265 bears the N6-(pyridoxal phosphate)lysine mark.

This sequence belongs to the class-III pyridoxal-phosphate-dependent aminotransferase family. HemL subfamily. As to quaternary structure, homodimer. It depends on pyridoxal 5'-phosphate as a cofactor.

It is found in the cytoplasm. It catalyses the reaction (S)-4-amino-5-oxopentanoate = 5-aminolevulinate. Its pathway is porphyrin-containing compound metabolism; protoporphyrin-IX biosynthesis; 5-aminolevulinate from L-glutamyl-tRNA(Glu): step 2/2. The protein is Glutamate-1-semialdehyde 2,1-aminomutase of Desulfatibacillum aliphaticivorans.